A 371-amino-acid polypeptide reads, in one-letter code: Chitin deacetylase (371 aa).

Residues M1–A20 form the signal peptide. The interval P73–T112 is disordered. Low complexity-rich tracts occupy residues P79 to P89 and P102 to T112. Cysteines 164 and 358 form a disulfide. N167 carries an N-linked (GlcNAc...) asparagine glycan. Residues G168 to V353 enclose the NodB homology domain. D175 functions as the Proton acceptor in the catalytic mechanism. Residue D175 participates in acetate binding. Co(2+) is bound by residues D176, H228, and H232. N239 is a glycosylation site (N-linked (GlcNAc...) asparagine). Acetate is bound at residue Y270. Residue H327 is the Proton donor of the active site.

This sequence belongs to the polysaccharide deacetylase family. Co(2+) serves as cofactor.

The catalysed reaction is [(1-&gt;4)-N-acetyl-beta-D-glucosaminyl](n) + n H2O = chitosan + n acetate. Hydrolyzes the N-acetamido groups of N-acetyl-D-glucosamine residues in chitin to form chitosan and acetate. The polypeptide is Chitin deacetylase (Arthroderma benhamiae (strain ATCC MYA-4681 / CBS 112371) (Trichophyton mentagrophytes)).